The chain runs to 187 residues: Anterior gradient protein 1 (187 aa).

The N-terminal stretch at 1–20 (MQTGLSLVCLVLLCSALGEA) is a signal peptide.

Belongs to the AGR family.

Its subcellular location is the secreted. In terms of biological role, probably involved in cement gland formation. The protein is Anterior gradient protein 1 (ag1) of Xenopus tropicalis (Western clawed frog).